The primary structure comprises 145 residues: Cytochrome c550 (145 aa).

Positions 1-24 are cleaved as a signal peptide; it reads MNKNNVLRGLLVLAGLSLSSLALA. Residues 60 to 142 enclose the Cytochrome c domain; it reads LAVEIGASAY…AIRSYLESVH (83 aa). Heme c is bound by residues Cys-73, Cys-76, His-77, and Met-119.

In terms of assembly, monomer. Interacts with the quinoprotein ethanol dehydrogenase (QEDH) ExaA. Binds 1 heme group per subunit.

It localises to the periplasm. It functions in the pathway alcohol metabolism; ethanol degradation; acetate from ethanol. Functionally, is an essential component of the ethanol oxidation system that allows P.aeruginosa to grow on ethanol as the sole carbon and energy source. Is the direct electron acceptor of the quinoprotein ethanol dehydrogenase (QEDH). In Pseudomonas aeruginosa (strain ATCC 15692 / DSM 22644 / CIP 104116 / JCM 14847 / LMG 12228 / 1C / PRS 101 / PAO1), this protein is Cytochrome c550.